Here is a 380-residue protein sequence, read N- to C-terminus: High affinity transport system protein p37 (380 aa).

The first 26 residues, 1–26, serve as a signal peptide directing secretion; it reads MLKRKKLLQGFLKFLPLIIPATIFVS. A lipid anchor (N-palmitoyl cysteine) is attached at Cys27. The S-diacylglycerol cysteine moiety is linked to residue Cys27. The tract at residues 285 to 304 is disordered; that stretch reads NHFYTPTENNGKGDSEKSNN.

It is found in the cell membrane. P37 is part of a high-affinity transport system. In Mycoplasma pneumoniae (strain ATCC 29342 / M129 / Subtype 1) (Mycoplasmoides pneumoniae), this protein is High affinity transport system protein p37 (p37).